Consider the following 64-residue polypeptide: Large ribosomal subunit protein uL30 (64 aa).

Belongs to the universal ribosomal protein uL30 family. In terms of assembly, part of the 50S ribosomal subunit.

The chain is Large ribosomal subunit protein uL30 from Bdellovibrio bacteriovorus (strain ATCC 15356 / DSM 50701 / NCIMB 9529 / HD100).